The sequence spans 470 residues: Glutamate--tRNA ligase 2 (470 aa).

The 'HIGH' region signature appears at 11-21 (PSPTGHLHLGG). Residues 238 to 242 (KLSKR) carry the 'KMSKS' region motif. Lys241 serves as a coordination point for ATP.

The protein belongs to the class-I aminoacyl-tRNA synthetase family. Glutamate--tRNA ligase type 1 subfamily. As to quaternary structure, monomer.

The protein resides in the cytoplasm. The catalysed reaction is tRNA(Glu) + L-glutamate + ATP = L-glutamyl-tRNA(Glu) + AMP + diphosphate. Functionally, catalyzes the attachment of glutamate to tRNA(Glu) in a two-step reaction: glutamate is first activated by ATP to form Glu-AMP and then transferred to the acceptor end of tRNA(Glu). This Ehrlichia ruminantium (strain Welgevonden) protein is Glutamate--tRNA ligase 2.